A 313-amino-acid polypeptide reads, in one-letter code: Myeloma-overexpressed gene protein (313 aa).

The disordered stretch occupies residues 107–129; it reads ERNKGDKGAQTGAGLSQEAEDVD.

In Homo sapiens (Human), this protein is Myeloma-overexpressed gene protein (MYEOV).